A 714-amino-acid polypeptide reads, in one-letter code: Fatty acid oxidation complex subunit alpha (714 aa).

Positions 1–190 (MEMASAFTLN…KLGLVDDVVP (190 aa)) are enoyl-CoA hydratase. Positions 306–714 (APLNSVGILG…FWKTTATDLQ (409 aa)) are 3-hydroxyacyl-CoA dehydrogenase.

The protein in the N-terminal section; belongs to the enoyl-CoA hydratase/isomerase family. This sequence in the central section; belongs to the 3-hydroxyacyl-CoA dehydrogenase family. In terms of assembly, heterotetramer of two alpha chains (FadJ) and two beta chains (FadI).

It is found in the cytoplasm. It carries out the reaction a (3S)-3-hydroxyacyl-CoA = a (2E)-enoyl-CoA + H2O. The enzyme catalyses a 4-saturated-(3S)-3-hydroxyacyl-CoA = a (3E)-enoyl-CoA + H2O. It catalyses the reaction a (3S)-3-hydroxyacyl-CoA + NAD(+) = a 3-oxoacyl-CoA + NADH + H(+). The catalysed reaction is (3S)-3-hydroxybutanoyl-CoA = (3R)-3-hydroxybutanoyl-CoA. It participates in lipid metabolism; fatty acid beta-oxidation. Its function is as follows. Catalyzes the formation of a hydroxyacyl-CoA by addition of water on enoyl-CoA. Also exhibits 3-hydroxyacyl-CoA epimerase and 3-hydroxyacyl-CoA dehydrogenase activities. This is Fatty acid oxidation complex subunit alpha from Escherichia coli O6:K15:H31 (strain 536 / UPEC).